The sequence spans 96 residues: Maintenance of carboxysome distribution protein B (96 aa).

The segment covering 1–18 (MTNLEDKLSASIKTENKD) has biased composition (basic and acidic residues). The segment at 1–96 (MTNLEDKLSA…STHPRRVWPD (96 aa)) is disordered. Residues 59–74 (ARATTTKPAVSKSSKP) are compositionally biased toward low complexity.

In terms of assembly, monomer, associates with McdA:DNA. Interacts with shell components of the carboxysome.

Its subcellular location is the carboxysome. In terms of biological role, mcdA and McdB together mediate carboxysome positioning on the nucleoid and to prevent their aggregation in the cell. Undergoes liquid-liquid phase separation at pH 7.0 in the presence of crowders polyethylene glycol or Ficoll. McdA is an ATPase that forms dynamic gradients on the nucleoid in response to adapter protein McdB, which associates with carboxysomes. The interplay between McdA gradients on the nucleoid and McdB-bound carboxysomes result in the equal spacing of Cbs along the cell length. Stimulates the ATPase activity of McdA, causing McdA to be released from DNA. Functionally, incorrect positioning (aggregation) of carboxysomes results in reduced CO(2) fixation by encapsulated form 1 ribulose-1,5-bisphosphate carboxylase (RuBisCO, cbbL/cbbS), which leads to slower growth. This is Maintenance of carboxysome distribution protein B from Halothiobacillus neapolitanus (strain ATCC 23641 / c2) (Thiobacillus neapolitanus).